A 907-amino-acid polypeptide reads, in one-letter code: Protein translocase subunit SecA (907 aa).

ATP is bound by residues Gln87, 105–109 (GEGKT), and Asp513. Basic and acidic residues predominate over residues 841–853 (EAQRRAQAEEAAR). A disordered region spans residues 841-907 (EAQRRAQAEE…KYKQCHGQIN (67 aa)). Positions 854–865 (RAQAQHASAQSQ) are enriched in low complexity. Positions 872 to 887 (EGHHQPVVRDERKVGR) are enriched in basic and acidic residues. Zn(2+)-binding residues include Cys891, Cys893, Cys902, and His903.

The protein belongs to the SecA family. As to quaternary structure, monomer and homodimer. Part of the essential Sec protein translocation apparatus which comprises SecA, SecYEG and auxiliary proteins SecDF-YajC and YidC. It depends on Zn(2+) as a cofactor.

It localises to the cell inner membrane. The protein localises to the cytoplasm. It carries out the reaction ATP + H2O + cellular proteinSide 1 = ADP + phosphate + cellular proteinSide 2.. In terms of biological role, part of the Sec protein translocase complex. Interacts with the SecYEG preprotein conducting channel. Has a central role in coupling the hydrolysis of ATP to the transfer of proteins into and across the cell membrane, serving both as a receptor for the preprotein-SecB complex and as an ATP-driven molecular motor driving the stepwise translocation of polypeptide chains across the membrane. The sequence is that of Protein translocase subunit SecA from Vibrio vulnificus (strain YJ016).